The sequence spans 331 residues: Laforin (331 aa).

Positions methionine 1 to leucine 124 constitute a CBM20 domain. The residue at position 25 (serine 25) is a Phosphoserine; by AMPK. Substrate-binding positions include tryptophan 32, lysine 87, glycine 103–aspartate 107, aspartate 197, aspartate 235, and arginine 241. Positions histidine 156–lysine 323 constitute a Tyrosine-protein phosphatase domain. Cysteine 266 functions as the Phosphocysteine intermediate in the catalytic mechanism. The Glucan phosphatase signature motif CXAGXGR signature appears at cysteine 266–arginine 272. Substrate-binding positions include asparagine 267–arginine 272 and tyrosine 304.

It belongs to the protein-tyrosine phosphatase family. In terms of assembly, homodimer. Interacts with itself. Interacts with PPP1R3B, PPP1R3C, PPP1R3D, HIRIP5, and EPM2AIP1. Binds glycogen and Lafora bodies. Interacts with NHLRC1/malin (via the NHL repeats). Forms a complex with NHLRC1/malin and HSP70. Interacts with PPP1R3D; in the presence of NHLC1/malin the interaction leads to ubiquitination and autophagic degradation of PPP1R3D. Interacts (via the phosphatase domain) with MAPT/Tau; the interaction dephosphorylates MAPT. Interacts with PRDM8. Polyubiquitinated by NHLRC1/malin. In terms of processing, phosphorylation on Ser-25 by AMPK affects the phosphatase activity of the enzyme and its ability to homodimerize and interact with NHLRC1, PPP1R3C or PRKAA2. As to expression, widely expressed.

Its subcellular location is the cytoplasm. It is found in the endoplasmic reticulum membrane. The protein resides in the cell membrane. The catalysed reaction is O-phospho-L-tyrosyl-[protein] + H2O = L-tyrosyl-[protein] + phosphate. It carries out the reaction O-phospho-L-seryl-[protein] + H2O = L-seryl-[protein] + phosphate. It catalyses the reaction O-phospho-L-threonyl-[protein] + H2O = L-threonyl-[protein] + phosphate. In terms of biological role, plays an important role in preventing glycogen hyperphosphorylation and the formation of insoluble aggregates, via its activity as glycogen phosphatase, and by promoting the ubiquitination of proteins involved in glycogen metabolism via its interaction with the E3 ubiquitin ligase NHLRC1/malin. Dephosphorylates phosphotyrosine and synthetic substrates, such as para-nitrophenylphosphate (pNPP), and has low activity with phosphoserine and phosphothreonine substrates (in vitro). Has also been shown to dephosphorylate MAPT. Shows strong phosphatase activity towards complex carbohydrates in vitro, avoiding glycogen hyperphosphorylation which is associated with reduced branching and formation of insoluble aggregates. Forms a complex with NHLRC1/malin and HSP70, which suppresses the cellular toxicity of misfolded proteins by promoting their degradation through the ubiquitin-proteasome system (UPS). Acts as a scaffold protein to facilitate PPP1R3C/PTG ubiquitination by NHLRC1/malin. Also promotes proteasome-independent protein degradation through the macroautophagy pathway. The protein is Laforin (Epm2a) of Rattus norvegicus (Rat).